A 159-amino-acid polypeptide reads, in one-letter code: Phosphopantetheine adenylyltransferase (159 aa).

Residue serine 9 participates in substrate binding. Residues 9–10 and histidine 17 contribute to the ATP site; that span reads SF. Positions 41, 73, and 87 each coordinate substrate. ATP contacts are provided by residues 88 to 90, glutamate 98, and 122 to 128; these read GLR and YSFLSSS.

The protein belongs to the bacterial CoaD family. Homohexamer. Requires Mg(2+) as cofactor.

It is found in the cytoplasm. It carries out the reaction (R)-4'-phosphopantetheine + ATP + H(+) = 3'-dephospho-CoA + diphosphate. It participates in cofactor biosynthesis; coenzyme A biosynthesis; CoA from (R)-pantothenate: step 4/5. Functionally, reversibly transfers an adenylyl group from ATP to 4'-phosphopantetheine, yielding dephospho-CoA (dPCoA) and pyrophosphate. The polypeptide is Phosphopantetheine adenylyltransferase (Streptomyces coelicolor (strain ATCC BAA-471 / A3(2) / M145)).